A 35-amino-acid polypeptide reads, in one-letter code: Photosystem II reaction center protein Y (35 aa).

Residues 1-4 (MDTR) lie on the Lumenal side of the membrane. A helical transmembrane segment spans residues 5–23 (LLIVLLPIIAAASWAIYNI). Residues 24–35 (GKILLLQLTKRS) lie on the Stromal side of the membrane.

Belongs to the PsbY family. As to quaternary structure, PSII is composed of 1 copy each of membrane proteins PsbA, PsbB, PsbC, PsbD, PsbE, PsbF, PsbH, PsbI, PsbJ, PsbK, PsbL, PsbM, PsbT, PsbX, PsbY, PsbZ, Psb30/Ycf12, at least 3 peripheral proteins of the oxygen-evolving complex and a large number of cofactors. It forms dimeric complexes.

The protein localises to the plastid. Its subcellular location is the chloroplast thylakoid membrane. Functionally, loosely associated component of the core of photosystem II (PSII), it is not always seen in crystals. PSII is a light-driven water plastoquinone oxidoreductase, using light energy to abstract electrons from H(2)O, generating a proton gradient subsequently used for ATP formation. In Cyanidioschyzon merolae (strain NIES-3377 / 10D) (Unicellular red alga), this protein is Photosystem II reaction center protein Y.